Consider the following 659-residue polypeptide: Threonine--tRNA ligase (659 aa).

A TGS domain is found at 7-70 (DSELIKLTLP…QQDGAIEIVT (64 aa)). The catalytic stretch occupies residues 253–555 (DHRKLGSELE…LIENFAGNFP (303 aa)). Zn(2+) contacts are provided by cysteine 351, histidine 402, and histidine 532.

This sequence belongs to the class-II aminoacyl-tRNA synthetase family. In terms of assembly, homodimer. It depends on Zn(2+) as a cofactor.

It localises to the cytoplasm. The catalysed reaction is tRNA(Thr) + L-threonine + ATP = L-threonyl-tRNA(Thr) + AMP + diphosphate + H(+). In terms of biological role, catalyzes the attachment of threonine to tRNA(Thr) in a two-step reaction: L-threonine is first activated by ATP to form Thr-AMP and then transferred to the acceptor end of tRNA(Thr). Also edits incorrectly charged L-seryl-tRNA(Thr). The chain is Threonine--tRNA ligase from Chloroherpeton thalassium (strain ATCC 35110 / GB-78).